The primary structure comprises 892 residues: Translation initiation factor IF-2 (892 aa).

A disordered region spans residues 88 to 306; sequence KKRTFVKRDP…LQQGFQKPAQ (219 aa). Composition is skewed to basic and acidic residues over residues 93–159 and 166–216; these read VKRD…KDKV and DMIK…EENK. Positions 254–269 are enriched in basic residues; it reads GRGRNAKAARPAKKGK. The segment covering 270-282 has biased composition (basic and acidic residues); the sequence is HAESKADREEARA. The 170-residue stretch at 391–560 folds into the tr-type G domain; it reads PRAPVVTIMG…LLQAEVLELK (170 aa). Residues 400–407 form a G1 region; it reads GHVDHGKT. Residue 400 to 407 participates in GTP binding; the sequence is GHVDHGKT. Positions 425–429 are G2; sequence GITQH. Residues 446-449 form a G3 region; it reads DTPG. GTP is bound by residues 446-450 and 500-503; these read DTPGH and NKID. The G4 stretch occupies residues 500-503; sequence NKID. Positions 536–538 are G5; sequence SAK.

The protein belongs to the TRAFAC class translation factor GTPase superfamily. Classic translation factor GTPase family. IF-2 subfamily.

The protein resides in the cytoplasm. One of the essential components for the initiation of protein synthesis. Protects formylmethionyl-tRNA from spontaneous hydrolysis and promotes its binding to the 30S ribosomal subunits. Also involved in the hydrolysis of GTP during the formation of the 70S ribosomal complex. The chain is Translation initiation factor IF-2 from Salmonella schwarzengrund (strain CVM19633).